The following is a 373-amino-acid chain: Phospho-N-acetylmuramoyl-pentapeptide-transferase (373 aa).

Helical transmembrane passes span 34–54, 78–98, 100–120, 141–161, 181–201, 212–232, 252–272, 275–295, 301–321, and 350–370; these read GALFTSALIVFLFGPRIISSL, TPTMGGLMILAGIVVSSLLWA, LANVYVVATLLVTLGFGAIGF, LGLEFIIAAIAVYFMMNTALS, FMLNLGMFFVLFGAFVIVSAG, GLAIVPVMIAAASFGVIAYLA, LAVVLGAVIGAGLGFLWFNAP, AIFMGDTGSLALGGLIGTVAV, IVMAIIGGLFVLEALSVIIQV, and QVVVRFWIVAVILAMIGLSTL.

The protein belongs to the glycosyltransferase 4 family. MraY subfamily. Mg(2+) serves as cofactor.

The protein resides in the cell inner membrane. The enzyme catalyses UDP-N-acetyl-alpha-D-muramoyl-L-alanyl-gamma-D-glutamyl-meso-2,6-diaminopimeloyl-D-alanyl-D-alanine + di-trans,octa-cis-undecaprenyl phosphate = di-trans,octa-cis-undecaprenyl diphospho-N-acetyl-alpha-D-muramoyl-L-alanyl-D-glutamyl-meso-2,6-diaminopimeloyl-D-alanyl-D-alanine + UMP. It participates in cell wall biogenesis; peptidoglycan biosynthesis. Catalyzes the initial step of the lipid cycle reactions in the biosynthesis of the cell wall peptidoglycan: transfers peptidoglycan precursor phospho-MurNAc-pentapeptide from UDP-MurNAc-pentapeptide onto the lipid carrier undecaprenyl phosphate, yielding undecaprenyl-pyrophosphoryl-MurNAc-pentapeptide, known as lipid I. This is Phospho-N-acetylmuramoyl-pentapeptide-transferase from Rhizobium rhizogenes (strain K84 / ATCC BAA-868) (Agrobacterium radiobacter).